The following is a 120-amino-acid chain: MRSLNFYHVCTGLFESCGYALIMRDCDSITFRIDECPVPLLSIKNAYLKVNEISPEDFVDRIKHSGYLSMLRKGELIKTLECDFNLNLRKKCEKNLEKGDKAILIIHEEKELKFFDIEVL.

This is an uncharacterized protein from Aquifex aeolicus (strain VF5).